A 257-amino-acid polypeptide reads, in one-letter code: Urease accessory protein UreD 3 (257 aa).

A disordered region spans residues 1 to 22 (MSVRATARLRAEPDGRDGTALP).

The protein belongs to the UreD family. UreD, UreF and UreG form a complex that acts as a GTP-hydrolysis-dependent molecular chaperone, activating the urease apoprotein by helping to assemble the nickel containing metallocenter of UreC. The UreE protein probably delivers the nickel.

The protein localises to the cytoplasm. In terms of biological role, required for maturation of urease via the functional incorporation of the urease nickel metallocenter. This Streptomyces griseus subsp. griseus (strain JCM 4626 / CBS 651.72 / NBRC 13350 / KCC S-0626 / ISP 5235) protein is Urease accessory protein UreD 3.